The chain runs to 556 residues: Formate--tetrahydrofolate ligase (556 aa).

65–72 (TPAGEGKS) contributes to the ATP binding site.

This sequence belongs to the formate--tetrahydrofolate ligase family.

It carries out the reaction (6S)-5,6,7,8-tetrahydrofolate + formate + ATP = (6R)-10-formyltetrahydrofolate + ADP + phosphate. It participates in one-carbon metabolism; tetrahydrofolate interconversion. The chain is Formate--tetrahydrofolate ligase from Clostridium botulinum (strain Alaska E43 / Type E3).